The chain runs to 426 residues: Histidinol dehydrogenase (426 aa).

Positions 126, 188, and 210 each coordinate NAD(+). 3 residues coordinate substrate: S233, Q255, and H258. The Zn(2+) site is built by Q255 and H258. Catalysis depends on proton acceptor residues E323 and H324. Substrate-binding residues include H324, D357, E411, and H416. D357 contributes to the Zn(2+) binding site. H416 provides a ligand contact to Zn(2+).

It belongs to the histidinol dehydrogenase family. Zn(2+) is required as a cofactor.

It catalyses the reaction L-histidinol + 2 NAD(+) + H2O = L-histidine + 2 NADH + 3 H(+). Its pathway is amino-acid biosynthesis; L-histidine biosynthesis; L-histidine from 5-phospho-alpha-D-ribose 1-diphosphate: step 9/9. Its function is as follows. Catalyzes the sequential NAD-dependent oxidations of L-histidinol to L-histidinaldehyde and then to L-histidine. This is Histidinol dehydrogenase from Heliobacterium mobile (Heliobacillus mobilis).